Here is a 360-residue protein sequence, read N- to C-terminus: Phospho-N-acetylmuramoyl-pentapeptide-transferase (360 aa).

The next 10 helical transmembrane spans lie at Ile-27–Trp-47, Pro-72–Tyr-92, Ser-94–Ile-114, Trp-132–Gly-152, Ile-168–Ser-188, Gly-199–Thr-219, Phe-235–Trp-255, Val-263–Leu-283, Phe-288–Val-308, and Val-338–Lys-358.

It belongs to the glycosyltransferase 4 family. MraY subfamily. It depends on Mg(2+) as a cofactor.

It is found in the cell inner membrane. The catalysed reaction is UDP-N-acetyl-alpha-D-muramoyl-L-alanyl-gamma-D-glutamyl-meso-2,6-diaminopimeloyl-D-alanyl-D-alanine + di-trans,octa-cis-undecaprenyl phosphate = di-trans,octa-cis-undecaprenyl diphospho-N-acetyl-alpha-D-muramoyl-L-alanyl-D-glutamyl-meso-2,6-diaminopimeloyl-D-alanyl-D-alanine + UMP. It functions in the pathway cell wall biogenesis; peptidoglycan biosynthesis. Functionally, catalyzes the initial step of the lipid cycle reactions in the biosynthesis of the cell wall peptidoglycan: transfers peptidoglycan precursor phospho-MurNAc-pentapeptide from UDP-MurNAc-pentapeptide onto the lipid carrier undecaprenyl phosphate, yielding undecaprenyl-pyrophosphoryl-MurNAc-pentapeptide, known as lipid I. The sequence is that of Phospho-N-acetylmuramoyl-pentapeptide-transferase from Sodalis glossinidius (strain morsitans).